We begin with the raw amino-acid sequence, 371 residues long: Chorismate synthase (371 aa).

NADP(+) contacts are provided by Arg-48 and Arg-54. Residues Arg-125–Ser-127, Asn-238–Ala-239, Gly-278, Lys-293–Ser-297, and Arg-319 contribute to the FMN site.

It belongs to the chorismate synthase family. As to quaternary structure, homotetramer. Requires FMNH2 as cofactor.

It catalyses the reaction 5-O-(1-carboxyvinyl)-3-phosphoshikimate = chorismate + phosphate. The protein operates within metabolic intermediate biosynthesis; chorismate biosynthesis; chorismate from D-erythrose 4-phosphate and phosphoenolpyruvate: step 7/7. In terms of biological role, catalyzes the anti-1,4-elimination of the C-3 phosphate and the C-6 proR hydrogen from 5-enolpyruvylshikimate-3-phosphate (EPSP) to yield chorismate, which is the branch point compound that serves as the starting substrate for the three terminal pathways of aromatic amino acid biosynthesis. This reaction introduces a second double bond into the aromatic ring system. The chain is Chorismate synthase from Polynucleobacter asymbioticus (strain DSM 18221 / CIP 109841 / QLW-P1DMWA-1) (Polynucleobacter necessarius subsp. asymbioticus).